The chain runs to 376 residues: E3 ubiquitin-protein ligase RNF133 (376 aa).

Residues 65-167 (SSTLKRVAGV…LKGTEIFHLI (103 aa)) form the PA domain. The chain crosses the membrane as a helical span at residues 190–210 (YLVSFVIVTTATLAYFIFYHI). An RING-type; atypical zinc finger spans residues 256–297 (CVICFERYKPNDIVRILTCKHFFHKNCIDPWILPHGTCPICK). Residues 327-376 (ETLSPSEEETNNEVSPAGTSDKVIHVEENPTSQNNDIQPHSVVEDVHPSP) form a disordered region. The span at 355–364 (NPTSQNNDIQ) shows a compositional bias: polar residues.

As to quaternary structure, interacts with E3 ligase UBE2J1. In terms of processing, auto-ubiquitinated. In terms of tissue distribution, expression is testis-specific.

Its subcellular location is the endoplasmic reticulum membrane. The enzyme catalyses S-ubiquitinyl-[E2 ubiquitin-conjugating enzyme]-L-cysteine + [acceptor protein]-L-lysine = [E2 ubiquitin-conjugating enzyme]-L-cysteine + N(6)-ubiquitinyl-[acceptor protein]-L-lysine.. Its pathway is protein modification; protein ubiquitination. Functionally, has E3 ubiquitin-protein ligase activity. Plays a role in male fecundity through the interaction with the E2 ubituitin-protein ligase UBE2J1. This chain is E3 ubiquitin-protein ligase RNF133, found in Homo sapiens (Human).